The sequence spans 304 residues: Non-structural maintenance of chromosomes element 3 homolog (304 aa).

Disordered regions lie at residues M1–Q82 and A285–S304. Residues A32 to F43 show a composition bias toward basic and acidic residues. Residues S57, S60, and S64 each carry the phosphoserine modification. Residues S60–R80 are compositionally biased toward low complexity. Positions G78 to S304 are interaction with NSMCE1. The MAGE domain maps to L85 to A285.

In terms of assembly, component of the SMC5-SMC6 complex which consists at least of SMC5, SMC6, NSMCE2, NSMCE1, NSMCE4A or EID3 and NSMCE3. NSMCE1, NSMCE4A or EID3 and NSMCE3 probably form a subcomplex that bridges the head domains of the SMC5:SMC6 heterodimer. Interacts with PJA1. Interacts with E2F1 (via C-terminus). Interacts with NGFR (via C-terminus). Interacts with NSMCE1. Interacts with NSMCE4. Interacts with SMC6. Interacts with EID3. Ubiquitous.

The protein resides in the cytoplasm. The protein localises to the nucleus. It is found in the chromosome. Its subcellular location is the telomere. In terms of biological role, component of the SMC5-SMC6 complex, a complex involved in repair of DNA double-strand breaks by homologous recombination. The complex may promote sister chromatid homologous recombination by recruiting the SMC1-SMC3 cohesin complex to double-strand breaks. The complex is required for telomere maintenance via recombination in ALT (alternative lengthening of telomeres) cell lines and mediates sumoylation of shelterin complex (telosome) components which is proposed to lead to shelterin complex disassembly in ALT-associated PML bodies (APBs). In vitro enhances ubiquitin ligase activity of NSMCE1. Proposed to act through recruitment and/or stabilization of the Ubl-conjugating enzyme (E2) at the E3:substrate complex. May be a growth suppressor that facilitates the entry of the cell into cell cycle arrest. This Homo sapiens (Human) protein is Non-structural maintenance of chromosomes element 3 homolog.